A 736-amino-acid chain; its full sequence is 1,4-alpha-glucan branching enzyme GlgB (736 aa).

Residue D419 is the Nucleophile of the active site. E472 acts as the Proton donor in catalysis.

The protein belongs to the glycosyl hydrolase 13 family. GlgB subfamily. As to quaternary structure, monomer.

The enzyme catalyses Transfers a segment of a (1-&gt;4)-alpha-D-glucan chain to a primary hydroxy group in a similar glucan chain.. The protein operates within glycan biosynthesis; glycogen biosynthesis. Its function is as follows. Catalyzes the formation of the alpha-1,6-glucosidic linkages in glycogen by scission of a 1,4-alpha-linked oligosaccharide from growing alpha-1,4-glucan chains and the subsequent attachment of the oligosaccharide to the alpha-1,6 position. The chain is 1,4-alpha-glucan branching enzyme GlgB from Rhizobium meliloti (strain 1021) (Ensifer meliloti).